A 363-amino-acid polypeptide reads, in one-letter code: UDP-N-acetylglucosamine--N-acetylmuramyl-(pentapeptide) pyrophosphoryl-undecaprenol N-acetylglucosamine transferase (363 aa).

UDP-N-acetyl-alpha-D-glucosamine contacts are provided by residues threonine 14–glycine 16, asparagine 122, arginine 163, serine 190, and glutamine 285.

The protein belongs to the glycosyltransferase 28 family. MurG subfamily.

The protein resides in the cell inner membrane. The catalysed reaction is di-trans,octa-cis-undecaprenyl diphospho-N-acetyl-alpha-D-muramoyl-L-alanyl-D-glutamyl-meso-2,6-diaminopimeloyl-D-alanyl-D-alanine + UDP-N-acetyl-alpha-D-glucosamine = di-trans,octa-cis-undecaprenyl diphospho-[N-acetyl-alpha-D-glucosaminyl-(1-&gt;4)]-N-acetyl-alpha-D-muramoyl-L-alanyl-D-glutamyl-meso-2,6-diaminopimeloyl-D-alanyl-D-alanine + UDP + H(+). It functions in the pathway cell wall biogenesis; peptidoglycan biosynthesis. Cell wall formation. Catalyzes the transfer of a GlcNAc subunit on undecaprenyl-pyrophosphoryl-MurNAc-pentapeptide (lipid intermediate I) to form undecaprenyl-pyrophosphoryl-MurNAc-(pentapeptide)GlcNAc (lipid intermediate II). The protein is UDP-N-acetylglucosamine--N-acetylmuramyl-(pentapeptide) pyrophosphoryl-undecaprenol N-acetylglucosamine transferase of Prochlorococcus marinus (strain AS9601).